Reading from the N-terminus, the 661-residue chain is Junctophilin-1 (661 aa).

Over 1–639 (MTGGRFDFDD…EKEANSGPNS (639 aa)) the chain is Cytoplasmic. MORN repeat units lie at residues 14 to 36 (YCGG…KGQG), 38 to 59 (YSGS…SGNT), 60 to 82 (YQGY…KWMY), 106 to 128 (YEGT…DGGT), and 129 to 151 (YQGQ…PYGM). A phosphoserine mark is found at S157, S216, and S220. The disordered stretch occupies residues 228-247 (SKSSISSKRSSVRSDAAMSR). 2 MORN repeats span residues 281 to 303 (YMGE…NGMK) and 304 to 326 (YEGE…DGSK). The segment covering 433 to 454 (DAKENPEEKVPEKPPTPKESPH) has biased composition (basic and acidic residues). A disordered region spans residues 433 to 631 (DAKENPEEKV…SNDSCPALEK (199 aa)). A Phosphothreonine modification is found at T448. Position 452 is a phosphoserine (S452). Position 461 is a phosphothreonine (T461). S465, S469, and S475 each carry phosphoserine. Residues 599-613 (VAKESKAEPKAKKSE) show a composition bias toward basic and acidic residues. The helical; Anchor for type IV membrane protein transmembrane segment at 640 to 660 (IMIVLVMLLNIGLAILFVHFL) threads the bilayer.

The protein belongs to the junctophilin family. Abundantly expressed in skeletal muscle. Very low levels in heart.

It localises to the cell membrane. Its subcellular location is the endoplasmic reticulum membrane. The protein resides in the sarcoplasmic reticulum membrane. Its function is as follows. Junctophilins contribute to the formation of junctional membrane complexes (JMCs) which link the plasma membrane with the endoplasmic or sarcoplasmic reticulum in excitable cells. Provides a structural foundation for functional cross-talk between the cell surface and intracellular calcium release channels. JPH1 contributes to the construction of the skeletal muscle triad by linking the t-tubule (transverse-tubule) and SR (sarcoplasmic reticulum) membranes. This chain is Junctophilin-1 (JPH1), found in Homo sapiens (Human).